The sequence spans 245 residues: MKVTLLIPARYGSSRFPGKPLAPINGKPMIQHVYERASLAKGLDSIYVATDDDRIKDAVESFGGKVVMTSPDAASGTDRINDAIALLGLNDDDLVINLQGDQPLIDPISIEQIISLFERHPGEFEMATLGFEIVDKRELDDPMHVKMVFDNDHNALYFSRSRIPFGRDTNDYPVYKHLGVYAYTKRFVNAFAKLPLGRLEDLEKLEQLRALEYGHKIKIAISAFDSPEVDTPEDIRKCELRLAVD.

This sequence belongs to the KdsB family.

It is found in the cytoplasm. The enzyme catalyses 8-amino-3,8-dideoxy-alpha-D-manno-octulosonate + CTP = CMP-8-amino-3,8-dideoxy-alpha-D-manno-oct-2-ulosonate + diphosphate. Its pathway is bacterial outer membrane biogenesis; lipopolysaccharide biosynthesis. Functionally, activates KDO8N (a required 8-carbon sugar) for incorporation into bacterial lipopolysaccharide in the Shewanella genus. This is 8-amino-3,8-dideoxy-manno-octulosonate cytidylyltransferase from Shewanella frigidimarina (strain NCIMB 400).